We begin with the raw amino-acid sequence, 525 residues long: GMP synthase [glutamine-hydrolyzing] (525 aa).

The Glutamine amidotransferase type-1 domain occupies Arg-9 to Leu-207. Catalysis depends on Cys-86, which acts as the Nucleophile. Residues His-181 and Glu-183 contribute to the active site. One can recognise a GMPS ATP-PPase domain in the interval Trp-208–Arg-400. Ser-235–Ser-241 lines the ATP pocket.

Homodimer.

The catalysed reaction is XMP + L-glutamine + ATP + H2O = GMP + L-glutamate + AMP + diphosphate + 2 H(+). The protein operates within purine metabolism; GMP biosynthesis; GMP from XMP (L-Gln route): step 1/1. Functionally, catalyzes the synthesis of GMP from XMP. The polypeptide is GMP synthase [glutamine-hydrolyzing] (Pseudomonas fluorescens (strain Pf0-1)).